Consider the following 363-residue polypeptide: MSMDVTFLGTGAAYPSPTRGASALVLRCEGECWLFDCGEGTQTQLMKSQLKAGRITKIFITHLHGDHFFGLPGLLCTISLQSGSMVTKQPIEIYGPVGLRDFIWRTMELSHTELVFPYVVHELVPTADQCPTEELQESVQVDKTDNPPKEGEGRTILLDSEENSYLLVDDEQFVVKAFRLFHRIPSFGFSVVEKKRPGKLNAQKLKDLGVPPGPAYGKLKNGISVVLENGVTISPQDVLKKPIVGRKICILGDCSGVVDDAGVKLCFEADLLIHEATLDDTQMDKAKEHGHSTPQMAATFAKLCQAKRLVLTHFSQRYKPVALAREGEADGIVELKKQAESVLDLQEVTLAEDFMVISIPIKK.

The Zn(2+) site is built by histidine 62, histidine 64, aspartate 66, histidine 67, histidine 182, aspartate 253, and histidine 313. The Proton acceptor role is filled by aspartate 66.

It belongs to the RNase Z family. Homodimer. The cofactor is Zn(2+).

It is found in the cytoplasm. The protein resides in the cytosol. The protein localises to the nucleus. The catalysed reaction is Endonucleolytic cleavage of RNA, removing extra 3' nucleotides from tRNA precursor, generating 3' termini of tRNAs. A 3'-hydroxy group is left at the tRNA terminus and a 5'-phosphoryl group is left at the trailer molecule.. Functionally, zinc phosphodiesterase, which displays some tRNA 3'-processing endonuclease activity. Specifically involved in tRNA repair: acts downstream of the ribosome-associated quality control (RQC) pathway by removing a 2',3'-cyclic phosphate from tRNAs following cleavage by ANKZF1. tRNAs are then processed by TRNT1. The protein is Zinc phosphodiesterase ELAC protein 1 (ELAC1) of Bos taurus (Bovine).